The following is a 422-amino-acid chain: UDP-N-acetylglucosamine 1-carboxyvinyltransferase (422 aa).

23–24 (KN) provides a ligand contact to phosphoenolpyruvate. Arg92 contributes to the UDP-N-acetyl-alpha-D-glucosamine binding site. Residue Cys116 is the Proton donor of the active site. The residue at position 116 (Cys116) is a 2-(S-cysteinyl)pyruvic acid O-phosphothioketal. UDP-N-acetyl-alpha-D-glucosamine-binding positions include 121 to 125 (RPVDL), 161 to 164 (KVSV), Asp306, and Ile328.

The protein belongs to the EPSP synthase family. MurA subfamily.

The protein localises to the cytoplasm. It catalyses the reaction phosphoenolpyruvate + UDP-N-acetyl-alpha-D-glucosamine = UDP-N-acetyl-3-O-(1-carboxyvinyl)-alpha-D-glucosamine + phosphate. It participates in cell wall biogenesis; peptidoglycan biosynthesis. Its function is as follows. Cell wall formation. Adds enolpyruvyl to UDP-N-acetylglucosamine. The sequence is that of UDP-N-acetylglucosamine 1-carboxyvinyltransferase from Aliivibrio fischeri (strain ATCC 700601 / ES114) (Vibrio fischeri).